We begin with the raw amino-acid sequence, 278 residues long: Mediator of RNA polymerase II transcription subunit 18 (278 aa).

The protein belongs to the Mediator complex subunit 18 family. Component of the Mediator complex.

The protein localises to the nucleus. Its function is as follows. Component of the Mediator complex, a coactivator involved in the regulated transcription of nearly all RNA polymerase II-dependent genes. Mediator functions as a bridge to convey information from gene-specific regulatory proteins to the basal RNA polymerase II transcription machinery. Mediator is recruited to promoters by direct interactions with regulatory proteins and serves as a scaffold for the assembly of a functional preinitiation complex with RNA polymerase II and the general transcription factors. The sequence is that of Mediator of RNA polymerase II transcription subunit 18 (srb5) from Aspergillus clavatus (strain ATCC 1007 / CBS 513.65 / DSM 816 / NCTC 3887 / NRRL 1 / QM 1276 / 107).